The primary structure comprises 247 residues: Anionic trypsin (247 aa).

The first 15 residues, 1-15, serve as a signal peptide directing secretion; sequence MNPLLILAFLGAAVA. Positions 16–23 are cleaved as a propeptide — activation peptide; sequence TPTDDDDK. Residues 24–244 enclose the Peptidase S1 domain; the sequence is IVGGYTCEEN…FVDWIQSTIA (221 aa). 6 cysteine pairs are disulfide-bonded: cysteine 30–cysteine 160, cysteine 48–cysteine 64, cysteine 132–cysteine 233, cysteine 139–cysteine 206, cysteine 171–cysteine 185, and cysteine 196–cysteine 220. Residue histidine 63 is the Charge relay system of the active site. Positions 75, 77, 80, and 85 each coordinate Ca(2+). Catalysis depends on aspartate 107, which acts as the Charge relay system. Serine 200 functions as the Charge relay system in the catalytic mechanism.

It belongs to the peptidase S1 family. Requires Ca(2+) as cofactor.

Its subcellular location is the secreted. It localises to the extracellular space. It catalyses the reaction Preferential cleavage: Arg-|-Xaa, Lys-|-Xaa.. The polypeptide is Anionic trypsin (Canis lupus familiaris (Dog)).